Here is a 347-residue protein sequence, read N- to C-terminus: NADH-ubiquinone oxidoreductase chain 2 (347 aa).

The next 10 membrane-spanning stretches (helical) occupy residues 3–23 (PIIY…VMIS), 25–45 (HWLL…PVLM), 59–79 (YFLT…INLL), 89–109 (MFNP…LGLS), 149–169 (INPN…GWGG), 178–198 (IMAY…PYNT), 200–220 (MTIL…MLLI), 237–257 (MPVI…LPPL), 274–294 (ESII…YFYM), and 325–345 (LLPT…ALSS).

The protein belongs to the complex I subunit 2 family. In terms of assembly, core subunit of respiratory chain NADH dehydrogenase (Complex I) which is composed of 45 different subunits. Interacts with TMEM242.

The protein resides in the mitochondrion inner membrane. It catalyses the reaction a ubiquinone + NADH + 5 H(+)(in) = a ubiquinol + NAD(+) + 4 H(+)(out). In terms of biological role, core subunit of the mitochondrial membrane respiratory chain NADH dehydrogenase (Complex I) which catalyzes electron transfer from NADH through the respiratory chain, using ubiquinone as an electron acceptor. Essential for the catalytic activity and assembly of complex I. The chain is NADH-ubiquinone oxidoreductase chain 2 from Sus scrofa (Pig).